The chain runs to 539 residues: Serine/threonine-protein kinase 35 (539 aa).

Positions 103 to 161 are disordered; it reads ITIQGPAPPHLGARRRDEARGARAAPLLLPPPPAAMETGKENGARRGTKSPERKRRSPV. Residues 148-160 are compositionally biased toward basic residues; that stretch reads RGTKSPERKRRSP. In terms of domain architecture, Protein kinase spans 207–535; the sequence is YSLLAEIGRG…FELETRMDQV (329 aa). ATP is bound by residues 213–221 and K236; that span reads IGRGSYGVV. Catalysis depends on D365, which acts as the Proton acceptor.

Belongs to the protein kinase superfamily. Ser/Thr protein kinase family. As to quaternary structure, interacts with PDLIM1/CLP-36. In terms of processing, autophosphorylated.

Its subcellular location is the nucleus. The protein resides in the nucleolus. It is found in the cytoplasm. It catalyses the reaction L-seryl-[protein] + ATP = O-phospho-L-seryl-[protein] + ADP + H(+). The catalysed reaction is L-threonyl-[protein] + ATP = O-phospho-L-threonyl-[protein] + ADP + H(+). The chain is Serine/threonine-protein kinase 35 (Stk35) from Mus musculus (Mouse).